The following is a 404-amino-acid chain: WD repeat and SOCS box-containing protein 2 (404 aa).

WD repeat units lie at residues 105–148 (PPSR…LLLN), 151–191 (GHQD…KQIQ), 195–234 (GHLQ…LIRK), 237–276 (GHQS…RLRS), and 291–330 (VHMS…PVAF). Residues 356–404 (HVQFWTAPRVLSSLKHLCRKALRSFLTTYQVLALPIPKKMKEFLTYRTF) enclose the SOCS box domain.

It participates in protein modification; protein ubiquitination. In terms of biological role, may be a substrate-recognition component of a SCF-like ECS (Elongin-Cullin-SOCS-box protein) E3 ubiquitin ligase complex which mediates the ubiquitination and subsequent proteasomal degradation of target proteins. The polypeptide is WD repeat and SOCS box-containing protein 2 (Wsb2) (Mus musculus (Mouse)).